Consider the following 837-residue polypeptide: Tuftelin-interacting protein 11 (837 aa).

Residues 1–13 (MSLSHLYRDGEGH) are compositionally biased toward basic and acidic residues. Disordered regions lie at residues 1–31 (MSLS…DWDL), 54–73 (WAER…RARD), and 85–133 (LKKG…KGFA). The interval 1-50 (MSLSHLYRDGEGHMDDDDDERENFEITDWDLQNEFNPNRQRHWQTKEEAT) is required for interaction with DHX15. Phosphoserine is present on S2. The span at 14–28 (MDDDDDERENFEITD) shows a compositional bias: acidic residues. Positions 54–64 (WAERDSDEERP) are enriched in basic and acidic residues. Phosphoserine occurs at positions 59 and 98. Positions 91-102 (EEAELEDSEDEE) are enriched in acidic residues. A compositionally biased stretch (basic and acidic residues) spans 103 to 116 (KPVKQDDFPKDFGP). At S144 the chain carries Phosphoserine. The 47-residue stretch at 149 to 195 (TKGIGQKLLQKMGYVPGRGLGKNAQGIINPIEAKQRKGKGAVGAYGS) folds into the G-patch domain. 2 disordered regions span residues 183–236 (QRKG…KKKP) and 289–312 (HNVP…EAKA). Residue S210 is modified to Phosphoserine. The span at 217–231 (EFQKELSQWRKDPSG) shows a compositional bias: basic and acidic residues. The Nuclear localization signal motif lies at 700–705 (VKDKFN). A required for nuclear speckle localization region spans residues 710-734 (IMNRAVSSNVGAYMQPGARENIAYL).

Belongs to the TFP11/STIP family. As to quaternary structure, identified in the spliceosome C complex. Found in the Intron Large (IL) complex, a post-mRNA release spliceosomal complex containing the excised intron, U2, U5 and U6 snRNPs, and splicing factors. Interacts with TUFT1. Interacts with DHX15; indicative for a recruitment of DHX15 to the IL complex. Interacts with GCFC2.

The protein resides in the cytoplasm. It localises to the nucleus. In terms of biological role, involved in pre-mRNA splicing, specifically in spliceosome disassembly during late-stage splicing events. Intron turnover seems to proceed through reactions in two lariat-intron associated complexes termed Intron Large (IL) and Intron Small (IS). In cooperation with DHX15 seems to mediate the transition of the U2, U5 and U6 snRNP-containing IL complex to the snRNP-free IS complex leading to efficient debranching and turnover of excised introns. May play a role in the differentiation of ameloblasts and odontoblasts or in the forming of the enamel extracellular matrix. This chain is Tuftelin-interacting protein 11 (TFIP11), found in Canis lupus familiaris (Dog).